The chain runs to 318 residues: Isoaspartyl peptidase/L-asparaginase (318 aa).

Residue Thr180 is the Nucleophile of the active site. Residues 208-211 and 229-232 contribute to the substrate site; these read RVSD and TGIG.

Belongs to the Ntn-hydrolase family. As to quaternary structure, heterotetramer of two alpha and two beta chains arranged as a dimer of alpha/beta heterodimers. Post-translationally, cleaved into an alpha and beta chain by autocatalysis; this activates the enzyme. The N-terminal residue of the beta subunit is responsible for the nucleophile hydrolase activity.

It carries out the reaction Cleavage of a beta-linked Asp residue from the N-terminus of a polypeptide.. In terms of biological role, degrades proteins damaged by L-isoaspartyl residue formation (also known as beta-Asp residues). Probably performs the final step in the degradation of the reserve polymer cyanophycin (depolymerizes the building block L-beta-Asp-Arg). Also has L-asparaginase activity. The polypeptide is Isoaspartyl peptidase/L-asparaginase (Nostoc sp. (strain PCC 7120 / SAG 25.82 / UTEX 2576)).